A 167-amino-acid polypeptide reads, in one-letter code: Ureidoglycolate lyase (167 aa).

Belongs to the ureidoglycolate lyase family. In terms of assembly, homodimer. Requires Ni(2+) as cofactor.

It carries out the reaction (S)-ureidoglycolate = urea + glyoxylate. Its pathway is nitrogen metabolism; (S)-allantoin degradation. Its function is as follows. Catalyzes the catabolism of the allantoin degradation intermediate (S)-ureidoglycolate, generating urea and glyoxylate. Involved in the utilization of allantoin as nitrogen source. The chain is Ureidoglycolate lyase from Pseudomonas putida (strain ATCC 700007 / DSM 6899 / JCM 31910 / BCRC 17059 / LMG 24140 / F1).